An 846-amino-acid polypeptide reads, in one-letter code: Aminopeptidase N (846 aa).

Substrate contacts are provided by residues Glu120 and 252–256 (GAMEN). His288 is a binding site for Zn(2+). The active-site Proton acceptor is Glu289. 2 residues coordinate Zn(2+): His292 and Glu311.

It belongs to the peptidase M1 family. As to quaternary structure, monomer. Zn(2+) is required as a cofactor.

Its subcellular location is the cytoplasm. The enzyme catalyses Release of an N-terminal amino acid, Xaa-|-Yaa- from a peptide, amide or arylamide. Xaa is preferably Ala, but may be most amino acids including Pro (slow action). When a terminal hydrophobic residue is followed by a prolyl residue, the two may be released as an intact Xaa-Pro dipeptide.. In terms of biological role, aminopeptidase with broad substrate specificity to several peptides. It has more affinity for oligopeptides than for dipeptides. It plays an essential role in the metabolism, it may be involved in nitrogen supply or protein turnover. The sequence is that of Aminopeptidase N (pepN) from Lactococcus lactis subsp. lactis (strain IL1403) (Streptococcus lactis).